Here is a 230-residue protein sequence, read N- to C-terminus: Cytidylate kinase (230 aa).

Position 14–22 (14–22 (GPSGVGKSS)) interacts with ATP.

It belongs to the cytidylate kinase family. Type 1 subfamily.

The protein localises to the cytoplasm. It catalyses the reaction CMP + ATP = CDP + ADP. It carries out the reaction dCMP + ATP = dCDP + ADP. The polypeptide is Cytidylate kinase (Buchnera aphidicola subsp. Baizongia pistaciae (strain Bp)).